The following is a 160-amino-acid chain: Fimbrial protein (160 aa).

Positions 1–7 (MKSLQKG) are cleaved as a propeptide — leader sequence. At Phe-8 the chain carries N-methylphenylalanine. The chain crosses the membrane as a helical span at residues 8–28 (FTLIELMIVVAIIGILAAFAI).

The protein belongs to the N-Me-Phe pilin family. In terms of assembly, the pili are polar flexible filaments of about 5.4 nanometers diameter and 2.5 micrometers average length; they consist of only a single polypeptide chain arranged in a helical configuration of five subunits per turn in the assembled pilus.

It localises to the fimbrium. The protein localises to the membrane. This is Fimbrial protein (fimA) from Dichelobacter nodosus (Bacteroides nodosus).